We begin with the raw amino-acid sequence, 590 residues long: Aspartate--tRNA(Asp/Asn) ligase (590 aa).

E173 is a binding site for L-aspartate. Positions 197-200 (QIFK) are aspartate. Position 219 (R219) interacts with L-aspartate. Residues 219 to 221 (RDE) and Q228 each bind ATP. H450 contributes to the L-aspartate binding site. Residue E484 participates in ATP binding. R491 contributes to the L-aspartate binding site. 536–539 (GLDR) serves as a coordination point for ATP.

Belongs to the class-II aminoacyl-tRNA synthetase family. Type 1 subfamily. As to quaternary structure, homodimer.

It localises to the cytoplasm. The enzyme catalyses tRNA(Asx) + L-aspartate + ATP = L-aspartyl-tRNA(Asx) + AMP + diphosphate. Functionally, aspartyl-tRNA synthetase with relaxed tRNA specificity since it is able to aspartylate not only its cognate tRNA(Asp) but also tRNA(Asn). Reaction proceeds in two steps: L-aspartate is first activated by ATP to form Asp-AMP and then transferred to the acceptor end of tRNA(Asp/Asn). This Coxiella burnetii (strain Dugway 5J108-111) protein is Aspartate--tRNA(Asp/Asn) ligase.